We begin with the raw amino-acid sequence, 760 residues long: Penicillin-binding protein 1B (760 aa).

Residues 1–8 (MFFNFKKY) are Cytoplasmic-facing. Residues 9-29 (FLIKVFFFVLILTLCYGLYLY) form a helical; Signal-anchor for type II membrane protein membrane-spanning segment. The Extracellular segment spans residues 30-760 (VKINRFINGK…NFLFWLKNLF (731 aa)). Positions 136 to 308 (FRLEPKLIAM…SLYSPWTNPN (173 aa)) are transglycosylase. The active-site Proton donor; for transglycosylase activity is the Glu174. Residues 392–684 (EQAVKIEIPI…SSGAMQIYKR (293 aa)) form a transpeptidase region. Ser451 acts as the Acyl-ester intermediate; for transpeptidase activity in catalysis.

In the N-terminal section; belongs to the glycosyltransferase 51 family. This sequence in the C-terminal section; belongs to the transpeptidase family.

It localises to the cell membrane. The enzyme catalyses [GlcNAc-(1-&gt;4)-Mur2Ac(oyl-L-Ala-gamma-D-Glu-L-Lys-D-Ala-D-Ala)](n)-di-trans,octa-cis-undecaprenyl diphosphate + beta-D-GlcNAc-(1-&gt;4)-Mur2Ac(oyl-L-Ala-gamma-D-Glu-L-Lys-D-Ala-D-Ala)-di-trans,octa-cis-undecaprenyl diphosphate = [GlcNAc-(1-&gt;4)-Mur2Ac(oyl-L-Ala-gamma-D-Glu-L-Lys-D-Ala-D-Ala)](n+1)-di-trans,octa-cis-undecaprenyl diphosphate + di-trans,octa-cis-undecaprenyl diphosphate + H(+). It catalyses the reaction Preferential cleavage: (Ac)2-L-Lys-D-Ala-|-D-Ala. Also transpeptidation of peptidyl-alanyl moieties that are N-acyl substituents of D-alanine.. Its pathway is cell wall biogenesis; peptidoglycan biosynthesis. Its function is as follows. Cell wall formation. Synthesis of cross-linked peptidoglycan from the lipid intermediates. The enzyme has a penicillin-insensitive transglycosylase N-terminal domain (formation of linear glycan strands) and a penicillin-sensitive transpeptidase C-terminal domain (cross-linking of the peptide subunits). The chain is Penicillin-binding protein 1B (mrcB) from Buchnera aphidicola subsp. Acyrthosiphon pisum (strain APS) (Acyrthosiphon pisum symbiotic bacterium).